Here is an 845-residue protein sequence, read N- to C-terminus: Disintegrin and metalloproteinase domain-containing protein 9 (845 aa).

The signal sequence occupies residues 1–29 (MGPRALSPLASLRLRWLLACGLLGPVLEA). Over 30 to 697 (GRPDLEQTVH…YNAKSTALRD (668 aa)) the chain is Extracellular. N-linked (GlcNAc...) asparagine glycans are attached at residues Asn-144, Asn-154, and Asn-231. The 195-residue stretch at 212 to 406 (RYVELFIVVD…KGGSCLLNIP (195 aa)) folds into the Peptidase M12B domain. 4 disulfides stabilise this stretch: Cys-322–Cys-401, Cys-363–Cys-385, Cys-365–Cys-370, and Cys-473–Cys-493. His-347 contacts Zn(2+). The active site involves Glu-348. Zn(2+) contacts are provided by His-351 and His-357. 3 N-linked (GlcNAc...) asparagine glycosylation sites follow: Asn-381, Asn-487, and Asn-636. The Disintegrin domain occupies 414–501 (APSCGNKLVD…FCPPDVFIQN (88 aa)). Intrachain disulfides connect Cys-644/Cys-656, Cys-650/Cys-662, and Cys-664/Cys-673. Residues 644 to 698 (CDIQGKCHGHGVCNSNKNCHCEDGWAPPHCDTKGYGGSVDSGPTYNAKSTALRDG) form the EGF-like domain. The chain crosses the membrane as a helical span at residues 698–718 (GLLVFFFLIVPLVAAAIFLFI). Residues 719 to 845 (KRDELRKTFR…PAPPLYSSLT (127 aa)) are Cytoplasmic-facing. The interval 729 to 845 (KKRSQMSDGR…PAPPLYSSLT (117 aa)) is disordered. Over residues 734 to 745 (MSDGRNQANVSR) the composition is skewed to polar residues. A compositionally biased stretch (pro residues) spans 783-794 (PGGPGVSRPPPG).

Interacts with SH3GL2 and SNX9 through its cytoplasmic tail. Interacts with ITGA6. The cofactor is Zn(2+). Post-translationally, proteolytically cleaved in the trans-Golgi network before it reaches the plasma membrane to generate a mature protein. The removal of the pro-domain occurs via cleavage at two different sites. Processed most likely by a pro-protein convertase such as furin, at the boundary between the pro-domain and the catalytic domain. An additional upstream cleavage pro-protein convertase site (Arg-56/Glu-57) has an important role in the activation of ADAM9. Phosphorylation is induced in vitro by phorbol-12-myristate-13-acetate (PMA).

The protein localises to the cell membrane. With respect to regulation, synthesized as an inactive form which is proteolytically cleaved to generate an active enzyme. Processing at the upstream site is particularly important for activation of the proenzyme, whereas processing at the boundary between the pro-domain and the catalytic domain does not appear to be essential. Inhibited by hydroxamic acid-based inhibitors. In terms of biological role, metalloprotease that cleaves and releases a number of molecules with important roles in tumorigenesis and angiogenesis, such as TEK, KDR, EPHB4, CD40, VCAM1 and CDH5. May mediate cell-cell, cell-matrix interactions and regulate the motility of cells via interactions with integrins. The chain is Disintegrin and metalloproteinase domain-containing protein 9 from Mus musculus (Mouse).